The sequence spans 505 residues: DEAD-box ATP-dependent RNA helicase 41 (505 aa).

The HIT-type zinc finger occupies 27-56 (GEPKCVICSRYGEYICDETNDDVCSLECKQ). The short motif at 110-138 (LTFTSCGLPPKLLLNLETAGYDFPTPIQM) is the Q motif element. In terms of domain architecture, Helicase ATP-binding spans 141 to 318 (IPAALTGKSL…GSLAKEIILV (178 aa)). Residue 154-161 (ADTGSGKT) participates in ATP binding. The short motif at 267–270 (DEVD) is the DEAD box element. One can recognise a Helicase C-terminal domain in the interval 342 to 492 (KKQKLFDILR…AIPKELINLT (151 aa)).

This sequence belongs to the DEAD box helicase family. DDX59 subfamily.

The enzyme catalyses ATP + H2O = ADP + phosphate + H(+). In Arabidopsis thaliana (Mouse-ear cress), this protein is DEAD-box ATP-dependent RNA helicase 41 (RH41).